A 199-amino-acid polypeptide reads, in one-letter code: Phycocyanobilin lyase CpcT (199 aa).

The protein belongs to the CpcT/CpeT biliprotein lyase family.

Functionally, catalyzes the site-selective attachment of phycocyanobilin (PCB) to 'Cys-154' of C-phycocyanin subunit beta (CpcB) and to 'Cys-153' of phycoerythrocyanin subunit beta (PecB). Does not have chromophore lyase activity for ApcA1, ApcA2, ApcB, ApcD, ApcF or PecA. The chain is Phycocyanobilin lyase CpcT (cpcT1) from Nostoc sp. (strain PCC 7120 / SAG 25.82 / UTEX 2576).